Reading from the N-terminus, the 491-residue chain is Cytochrome P450 2B3 (491 aa).

Cysteine 436 lines the heme pocket.

Belongs to the cytochrome P450 family. Heme is required as a cofactor. In terms of tissue distribution, liver. Not found in the lung, kidney and prostate.

It is found in the endoplasmic reticulum membrane. It localises to the microsome membrane. The catalysed reaction is an organic molecule + reduced [NADPH--hemoprotein reductase] + O2 = an alcohol + oxidized [NADPH--hemoprotein reductase] + H2O + H(+). Cytochromes P450 are a group of heme-thiolate monooxygenases. In liver microsomes, this enzyme is involved in an NADPH-dependent electron transport pathway. It oxidizes a variety of structurally unrelated compounds, including steroids, fatty acids, and xenobiotics. The polypeptide is Cytochrome P450 2B3 (Cyp2b3) (Rattus norvegicus (Rat)).